The sequence spans 160 residues: Nucleotide-binding protein VSAL_I1728 (160 aa).

This sequence belongs to the YajQ family.

In terms of biological role, nucleotide-binding protein. This Aliivibrio salmonicida (strain LFI1238) (Vibrio salmonicida (strain LFI1238)) protein is Nucleotide-binding protein VSAL_I1728.